The chain runs to 289 residues: 2-hydroxy-6-oxononadienedioate/2-hydroxy-6-oxononatrienedioate hydrolase (289 aa).

Positions 39–275 (TVVMLHGSGP…RCGHWAQWEH (237 aa)) constitute an AB hydrolase-1 domain. Catalysis depends on histidine 269, which acts as the Proton acceptor.

The protein belongs to the AB hydrolase superfamily. MhpC family. As to quaternary structure, homodimer.

It catalyses the reaction (2Z,4E)-2-hydroxy-6-oxonona-2,4-dienedioate + H2O = (2Z)-2-hydroxypenta-2,4-dienoate + succinate + H(+). The enzyme catalyses (2Z,4E,7E)-2-hydroxy-6-oxonona-2,4,7-trienedioate + H2O = (2Z)-2-hydroxypenta-2,4-dienoate + fumarate + H(+). It participates in aromatic compound metabolism; 3-phenylpropanoate degradation. Its function is as follows. Catalyzes the cleavage of the C5-C6 bond of 2-hydroxy-6-oxononadienedioate and 2-hydroxy-6-oxononatrienedioate, a dienol ring fission product of the bacterial meta-cleavage pathway for degradation of phenylpropionic acid. This chain is 2-hydroxy-6-oxononadienedioate/2-hydroxy-6-oxononatrienedioate hydrolase, found in Paraburkholderia xenovorans (strain LB400).